The following is a 378-amino-acid chain: Alanine racemase (378 aa).

Residue Lys35 is the Proton acceptor; specific for D-alanine of the active site. Position 35 is an N6-(pyridoxal phosphate)lysine (Lys35). Residue Arg133 coordinates substrate. The active-site Proton acceptor; specific for L-alanine is the Tyr266. Met314 provides a ligand contact to substrate.

It belongs to the alanine racemase family. Requires pyridoxal 5'-phosphate as cofactor.

It catalyses the reaction L-alanine = D-alanine. The protein operates within amino-acid biosynthesis; D-alanine biosynthesis; D-alanine from L-alanine: step 1/1. Catalyzes the interconversion of L-alanine and D-alanine. May also act on other amino acids. The sequence is that of Alanine racemase (alr) from Beutenbergia cavernae (strain ATCC BAA-8 / DSM 12333 / CCUG 43141 / JCM 11478 / NBRC 16432 / NCIMB 13614 / HKI 0122).